The primary structure comprises 61 residues: UPF0434 protein PSPTO_3844 (61 aa).

This sequence belongs to the UPF0434 family.

This is UPF0434 protein PSPTO_3844 from Pseudomonas syringae pv. tomato (strain ATCC BAA-871 / DC3000).